The sequence spans 155 residues: Cytochrome c oxidase subunit 4, mitochondrial (155 aa).

The transit peptide at 1-25 directs the protein to the mitochondrion; the sequence is MLSLRQSIRFFKPATRTLCSSRYLL. Thr55 is subject to Phosphothreonine. 4 residues coordinate Zn(2+): Cys111, His119, Cys134, and Cys137.

Belongs to the cytochrome c oxidase subunit 5B family. Component of the cytochrome c oxidase (complex IV, CIV), a multisubunit enzyme composed of 12 subunits. The complex is composed of a catalytic core of 3 subunits COX1, COX2 and COX3, encoded in the mitochondrial DNA, and 9 supernumerary subunits COX4, COX5A (or COX5B), COX6, COX7, COX8, COX9, COX12, COX13 and COX26, which are encoded in the nuclear genome. The complex exists as a monomer or a dimer and forms supercomplexes (SCs) in the inner mitochondrial membrane with a dimer of ubiquinol-cytochrome c oxidoreductase (cytochrome b-c1 complex, complex III, CIII), resulting in 2 different assemblies (supercomplexes III(2)IV and III(2)IV(2)).

The protein resides in the mitochondrion inner membrane. It participates in energy metabolism; oxidative phosphorylation. Functionally, component of the cytochrome c oxidase, the last enzyme in the mitochondrial electron transport chain which drives oxidative phosphorylation. The respiratory chain contains 3 multisubunit complexes succinate dehydrogenase (complex II, CII), ubiquinol-cytochrome c oxidoreductase (cytochrome b-c1 complex, complex III, CIII) and cytochrome c oxidase (complex IV, CIV), that cooperate to transfer electrons derived from NADH and succinate to molecular oxygen, creating an electrochemical gradient over the inner membrane that drives transmembrane transport and the ATP synthase. Cytochrome c oxidase is the component of the respiratory chain that catalyzes the reduction of oxygen to water. Electrons originating from reduced cytochrome c in the intermembrane space (IMS) are transferred via the dinuclear copper A center (CU(A)) of COX2 and heme A of COX1 to the active site in COX1, a binuclear center (BNC) formed by heme A3 and copper B (CU(B)). The BNC reduces molecular oxygen to 2 water molecules using 4 electrons from cytochrome c in the IMS and 4 protons from the mitochondrial matrix. This Saccharomyces cerevisiae (strain ATCC 204508 / S288c) (Baker's yeast) protein is Cytochrome c oxidase subunit 4, mitochondrial (COX4).